A 232-amino-acid polypeptide reads, in one-letter code: Uracil phosphoribosyltransferase (232 aa).

GTP is bound at residue 38–42; the sequence is KGLVK. 5-phospho-alpha-D-ribose 1-diphosphate is bound by residues Arg-87, Arg-112, and 140-148; that span reads DPMIATGST. Uracil contacts are provided by residues Ile-204 and 209 to 211; that span reads GDA. 5-phospho-alpha-D-ribose 1-diphosphate is bound at residue Asp-210.

It belongs to the UPRTase family. It depends on Mg(2+) as a cofactor.

It catalyses the reaction UMP + diphosphate = 5-phospho-alpha-D-ribose 1-diphosphate + uracil. It participates in pyrimidine metabolism; UMP biosynthesis via salvage pathway; UMP from uracil: step 1/1. Allosterically activated by GTP. Functionally, catalyzes the conversion of uracil and 5-phospho-alpha-D-ribose 1-diphosphate (PRPP) to UMP and diphosphate. This is Uracil phosphoribosyltransferase from Pyrococcus furiosus (strain ATCC 43587 / DSM 3638 / JCM 8422 / Vc1).